A 235-amino-acid chain; its full sequence is 5'-methylthioadenosine/S-adenosylhomocysteine nucleosidase (235 aa).

Catalysis depends on E12, which acts as the Proton acceptor. Residues G78, M153, and M174–E175 contribute to the substrate site. The active-site Proton donor is D198.

The protein belongs to the PNP/UDP phosphorylase family. MtnN subfamily.

The catalysed reaction is S-adenosyl-L-homocysteine + H2O = S-(5-deoxy-D-ribos-5-yl)-L-homocysteine + adenine. It catalyses the reaction S-methyl-5'-thioadenosine + H2O = 5-(methylsulfanyl)-D-ribose + adenine. It carries out the reaction 5'-deoxyadenosine + H2O = 5-deoxy-D-ribose + adenine. Its pathway is amino-acid biosynthesis; L-methionine biosynthesis via salvage pathway; S-methyl-5-thio-alpha-D-ribose 1-phosphate from S-methyl-5'-thioadenosine (hydrolase route): step 1/2. Its function is as follows. Catalyzes the irreversible cleavage of the glycosidic bond in both 5'-methylthioadenosine (MTA) and S-adenosylhomocysteine (SAH/AdoHcy) to adenine and the corresponding thioribose, 5'-methylthioribose and S-ribosylhomocysteine, respectively. Also cleaves 5'-deoxyadenosine, a toxic by-product of radical S-adenosylmethionine (SAM) enzymes, into 5-deoxyribose and adenine. The protein is 5'-methylthioadenosine/S-adenosylhomocysteine nucleosidase of Geobacillus kaustophilus (strain HTA426).